The chain runs to 192 residues: uncharacterized protein (192 aa).

The signal sequence occupies residues 1-17 (MFKKILFPLVALFMLAG). Cys-18 carries N-palmitoyl cysteine lipidation. Cys-18 carries S-diacylglycerol cysteine lipidation.

The protein to H.influenzae HI_0162.

The protein resides in the cell membrane. This is an uncharacterized protein from Escherichia coli O6:H1 (strain CFT073 / ATCC 700928 / UPEC).